A 117-amino-acid polypeptide reads, in one-letter code: Large ribosomal subunit protein uL22 (117 aa).

Belongs to the universal ribosomal protein uL22 family. In terms of assembly, part of the 50S ribosomal subunit.

Its function is as follows. This protein binds specifically to 23S rRNA; its binding is stimulated by other ribosomal proteins, e.g. L4, L17, and L20. It is important during the early stages of 50S assembly. It makes multiple contacts with different domains of the 23S rRNA in the assembled 50S subunit and ribosome. Functionally, the globular domain of the protein is located near the polypeptide exit tunnel on the outside of the subunit, while an extended beta-hairpin is found that lines the wall of the exit tunnel in the center of the 70S ribosome. The chain is Large ribosomal subunit protein uL22 from Lactobacillus delbrueckii subsp. bulgaricus (strain ATCC 11842 / DSM 20081 / BCRC 10696 / JCM 1002 / NBRC 13953 / NCIMB 11778 / NCTC 12712 / WDCM 00102 / Lb 14).